The chain runs to 346 residues: E3 ubiquitin-protein ligase MARCHF9 (346 aa).

Disordered stretches follow at residues 20–39 and 47–92; these read GGGR…GGCG and STRD…PGAL. Basic and acidic residues predominate over residues 63 to 75; sequence PRARGLAGDKEPR. Residues 77 to 90 show a composition bias toward pro residues; it reads GPLPPPAPPLPPPG. An RING-CH-type zinc finger spans residues 102–162; sequence DSGLRTPQCR…ELCYFKYQVL (61 aa). Zn(2+) contacts are provided by Cys110, Cys113, Cys126, Cys128, His136, Cys139, Cys152, and Cys155. 2 helical membrane-spanning segments follow: residues 185 to 205 and 219 to 239; these read IAAI…LIWS and LFQI…GLII. Disordered regions lie at residues 273-301 and 326-346; these read DAGG…RPPA and PPDA…VTTV. The segment covering 284–296 has biased composition (polar residues); the sequence is PRNSRTGPTSGAT.

In terms of assembly, homodimer. Ubiquitously expressed.

Its subcellular location is the golgi apparatus membrane. It localises to the lysosome membrane. The catalysed reaction is S-ubiquitinyl-[E2 ubiquitin-conjugating enzyme]-L-cysteine + [acceptor protein]-L-lysine = [E2 ubiquitin-conjugating enzyme]-L-cysteine + N(6)-ubiquitinyl-[acceptor protein]-L-lysine.. It functions in the pathway protein modification; protein ubiquitination. In terms of biological role, E3 ubiquitin-protein ligase that may mediate ubiquitination of MHC-I, CD4 and ICAM1, and promote their subsequent endocytosis and sorting to lysosomes via multivesicular bodies. E3 ubiquitin ligases accept ubiquitin from an E2 ubiquitin-conjugating enzyme in the form of a thioester and then directly transfer the ubiquitin to targeted substrates. This Homo sapiens (Human) protein is E3 ubiquitin-protein ligase MARCHF9.